The chain runs to 142 residues: D-aminoacyl-tRNA deacylase (142 aa).

A Gly-cisPro motif, important for rejection of L-amino acids motif is present at residues 133-134 (GP).

This sequence belongs to the DTD family. In terms of assembly, homodimer.

It is found in the cytoplasm. The enzyme catalyses glycyl-tRNA(Ala) + H2O = tRNA(Ala) + glycine + H(+). It catalyses the reaction a D-aminoacyl-tRNA + H2O = a tRNA + a D-alpha-amino acid + H(+). Functionally, an aminoacyl-tRNA editing enzyme that deacylates mischarged D-aminoacyl-tRNAs. Also deacylates mischarged glycyl-tRNA(Ala), protecting cells against glycine mischarging by AlaRS. Acts via tRNA-based rather than protein-based catalysis; rejects L-amino acids rather than detecting D-amino acids in the active site. By recycling D-aminoacyl-tRNA to D-amino acids and free tRNA molecules, this enzyme counteracts the toxicity associated with the formation of D-aminoacyl-tRNA entities in vivo and helps enforce protein L-homochirality. This is D-aminoacyl-tRNA deacylase from Acidothermus cellulolyticus (strain ATCC 43068 / DSM 8971 / 11B).